We begin with the raw amino-acid sequence, 285 residues long: MNTFQMRDKLKERLSHLDVDFKFNREEETLRIYRTDNNKGITIKLNAIVAKYEDKKEKIVDEIVYYVDEAIAQMADKTLESISSSQIMPVIRATSFDKKTKQGVPFIYDEHTAETAVYYAVDLGKSYRLIDESMLEDLKLTEQQIREMSLFNVRKLSNSYTTDEVKGNIFYFINSNDGYDASRILNTAFLNEIEAQCQGEMLVAVPHQDVLIIADIRNKTGYDVMAHLTMEFFTKGLVPITSLSFGYKQGHLEPIFILGKNNKQKRDPNVIQRLEANRRKFNKDK.

Belongs to the UPF0354 family.

The protein is UPF0354 protein SA1564 of Staphylococcus aureus (strain N315).